The primary structure comprises 266 residues: Putative transmembrane ascorbate-dependent reductase CYB561 homolog (266 aa).

Topologically, residues 1–22 (MSLLFDPGFVILREDQSVKLFN) are cytoplasmic. Residues 23 to 43 (IILVMSQVFGGLAVLLVTIWM) traverse the membrane as a helical segment. Residues 27-240 (MSQVFGGLAV…YTVCVLLLVL (214 aa)) enclose the Cytochrome b561 domain. Residues 44 to 61 (SKFESGFAWNEDPDKEFN) lie on the Vesicular side of the membrane. The helical transmembrane segment at 62–82 (YHPTFMIMGMVFLFGEALLVY) threads the bilayer. Heme b contacts are provided by His63, Arg83, and Lys90. Residues 83-95 (RVFRNERKKFSKT) lie on the Cytoplasmic side of the membrane. L-ascorbate contacts are provided by Lys90 and Lys94. A helical transmembrane segment spans residues 96-116 (LHVILHSCVLVFMLMALKAVF). Residues His97, 134-137 (NLVS), and His139 contribute to the heme b site. At 117–141 (DYHNLHKDPSGNPAPIVNLVSLHSW) the chain is on the vesicular side. A helical transmembrane segment spans residues 142 to 162 (IGLSVVILYFAQYIVGFITYF). At 163 to 176 (FPGMPIPIRQLVMP) the chain is on the cytoplasmic side. Residue Arg171 participates in L-ascorbate binding. A helical membrane pass occupies residues 177–197 (FHQMFGVLIFIFVSITVAMGI). Positions 178 and 199 each coordinate heme b. At 198 to 219 (SERAAWKHTCWTKEGQMCAQQA) the chain is on the vesicular side. The helical transmembrane segment at 220-240 (TSSFVGVFTFLYTVCVLLLVL) threads the bilayer. Residues 241–266 (NPRWKRQSLPEEEGLHHLTSSHSMSD) lie on the Cytoplasmic side of the membrane. Position 245 (Lys245) interacts with heme b.

It depends on heme b as a cofactor.

The protein resides in the membrane. It catalyses the reaction monodehydro-L-ascorbate radical(out) + L-ascorbate(in) = monodehydro-L-ascorbate radical(in) + L-ascorbate(out). Functionally, putative transmembrane reductase that uses ascorbate as an electron donor in the cytoplasm and transfers electrons across membranes to reduce monodehydro-L-ascorbate radical in the lumen of secretory vesicles. In Caenorhabditis elegans, this protein is Putative transmembrane ascorbate-dependent reductase CYB561 homolog.